A 622-amino-acid chain; its full sequence is UvrABC system protein C (622 aa).

Residues 12-91 enclose the GIY-YIG domain; it reads SSPGVYIMKD…IKKYRPKYNF (80 aa). A UVR domain is found at 201 to 236; sequence REILKIFRERMSAAAAAEKYEKAARFRDLIRSIEVT.

Belongs to the UvrC family. In terms of assembly, interacts with UvrB in an incision complex.

It localises to the cytoplasm. Its function is as follows. The UvrABC repair system catalyzes the recognition and processing of DNA lesions. UvrC both incises the 5' and 3' sides of the lesion. The N-terminal half is responsible for the 3' incision and the C-terminal half is responsible for the 5' incision. The polypeptide is UvrABC system protein C (Geotalea daltonii (strain DSM 22248 / JCM 15807 / FRC-32) (Geobacter daltonii)).